The primary structure comprises 459 residues: Interleukin-7 receptor subunit alpha (459 aa).

Residues 1–20 form the signal peptide; it reads MMALGRAFAIVFCLIQAVSG. Topologically, residues 21 to 239 are extracellular; sequence ESGNAQDGDL…PEPKNQGGWD (219 aa). A disulfide bridge links Cys42 with Cys57. A glycan (N-linked (GlcNAc...) asparagine) is linked at Asn60. Intrachain disulfides connect Cys74–Cys82 and Cys108–Cys118. N-linked (GlcNAc...) asparagine glycans are attached at residues Asn115 and Asn177. In terms of domain architecture, Fibronectin type-III spans 131–232; that stretch reads APSDLKVVYR…PSSTFETPEP (102 aa). Residues 218–222 carry the WSXWS motif motif; sequence WSEWS. The helical transmembrane segment at 240 to 264 threads the bilayer; the sequence is PVLPSVTILSLFSVFLLVILAHVLW. Topologically, residues 265 to 459 are cytoplasmic; sequence KKRIKPVVWP…VTMSSFYQNK (195 aa). A Box 1 motif motif is present at residues 272-280; that stretch reads VWPSLPDHK. Thr282 is subject to Phosphothreonine; by PKC. Disordered stretches follow at residues 337–365 and 378–413; these read TQGHRAAVHSANRSPETSVSPPETVRRES and NAPPLLSSRSPDYRDGDRNRPPVYQDLLPNSGNTNV. The segment covering 347-357 has biased composition (polar residues); that stretch reads ANRSPETSVSP. Residues 388 to 397 show a composition bias toward basic and acidic residues; that stretch reads PDYRDGDRNR.

It belongs to the type I cytokine receptor family. Type 4 subfamily. As to quaternary structure, the IL7 receptor is a heterodimer of IL7R and IL2RG. The TSLP receptor is a heterodimer of CRLF2 and IL7R. Interacts with CD53. N-glycosylated IL-7Ralpha binds IL7 300-fold more tightly than the unglycosylated form. In terms of processing, ubiquitinated by MARCHF8; leading to lysosomal degradation. As to expression, spleen, thymus and fetal liver.

The protein localises to the membrane. Functionally, receptor for interleukin-7. Also acts as a receptor for thymic stromal lymphopoietin (TSLP). The sequence is that of Interleukin-7 receptor subunit alpha (Il7r) from Mus musculus (Mouse).